The primary structure comprises 354 residues: Uroporphyrinogen decarboxylase (354 aa).

Residues 27–31, D77, Y154, T209, and H327 contribute to the substrate site; that span reads RQAGR.

The protein belongs to the uroporphyrinogen decarboxylase family. Homodimer.

The protein localises to the cytoplasm. It catalyses the reaction uroporphyrinogen III + 4 H(+) = coproporphyrinogen III + 4 CO2. Its pathway is porphyrin-containing compound metabolism; protoporphyrin-IX biosynthesis; coproporphyrinogen-III from 5-aminolevulinate: step 4/4. In terms of biological role, catalyzes the decarboxylation of four acetate groups of uroporphyrinogen-III to yield coproporphyrinogen-III. This Hydrogenovibrio crunogenus (strain DSM 25203 / XCL-2) (Thiomicrospira crunogena) protein is Uroporphyrinogen decarboxylase.